Reading from the N-terminus, the 95-residue chain is Integration host factor subunit beta (95 aa).

A disordered region spans residues 57–76 (APRTGRNPKTGDKVDLEGKY). Basic and acidic residues predominate over residues 65-76 (KTGDKVDLEGKY).

This sequence belongs to the bacterial histone-like protein family. In terms of assembly, heterodimer of an alpha and a beta chain.

In terms of biological role, this protein is one of the two subunits of integration host factor, a specific DNA-binding protein that functions in genetic recombination as well as in transcriptional and translational control. The polypeptide is Integration host factor subunit beta (Enterobacter sp. (strain 638)).